We begin with the raw amino-acid sequence, 172 residues long: Mitochondrial import inner membrane translocase subunit Tim17-B (172 aa).

A disulfide bond links cysteine 9 and cysteine 78. Helical transmembrane passes span 17–37 (CGGA…IKGF), 61–77 (QIGG…STID), and 113–133 (VGSA…GILL). Residues 146–172 (PFLEDPSQLPPKDGTPAPGYPSYQQYH) form a disordered region.

This sequence belongs to the Tim17/Tim22/Tim23 family. As to quaternary structure, component of the TIM23 complex at least composed of TIMM23, TIMM17 (TIMM17A or TIMM17B) and TIMM50. The complex interacts with the TIMM44 component of the PAM complex and with DNAJC15. Forms one disulfide bond. Expression is abundant in heart and skeletal muscle, intermediate in brain, and weak in pancreas, placenta, kidney and liver.

Its subcellular location is the mitochondrion inner membrane. Its function is as follows. Essential component of the TIM23 complex, a complex that mediates the translocation of transit peptide-containing proteins across the mitochondrial inner membrane. This Homo sapiens (Human) protein is Mitochondrial import inner membrane translocase subunit Tim17-B (TIMM17B).